Reading from the N-terminus, the 213-residue chain is MNIVPISESAVVCSLPPPASIQQQRQLWAFARQLQSEQDIVEVVLGMNNLTVFTDFFVDFKPLVQRLEQLWAELKVSDFQGRHIEIPVIYGGERGQDLSDVAKFHQTTPERIIQMHSEPIYTVYMIGFQAGFPYLGGLPENLHTPRRATPRTVVPAGSVGIGGAQTGIYPFSSPGGWQLIGYTKQALFDKNQAQPTLLQAGDTVKFIVEGIEL.

This sequence belongs to the PxpB family. As to quaternary structure, forms a complex composed of PxpA, PxpB and PxpC.

The enzyme catalyses 5-oxo-L-proline + ATP + 2 H2O = L-glutamate + ADP + phosphate + H(+). Functionally, catalyzes the cleavage of 5-oxoproline to form L-glutamate coupled to the hydrolysis of ATP to ADP and inorganic phosphate. The protein is 5-oxoprolinase subunit B of Haemophilus influenzae (strain ATCC 51907 / DSM 11121 / KW20 / Rd).